The following is a 90-amino-acid chain: Mucin-like protein 1 (90 aa).

The signal sequence occupies residues 1 to 20 (MKFLAVLVLLGVSIFLVSAQ). O-linked (GalNAc...) threonine glycans are attached at residues Thr-23, Thr-24, Thr-30, Thr-34, Thr-46, Thr-47, Thr-51, Thr-52, Thr-54, Thr-55, Thr-59, Thr-60, Thr-62, and Thr-63. 2 stretches are compositionally biased toward low complexity: residues 25–36 (AAPADTYPATGP) and 44–68 (AETT…ASTT). A disordered region spans residues 25–68 (AAPADTYPATGPADDEAPDAETTAAATTATTAAPTTATTAASTT). 3 tandem repeats follow at residues 46 to 53 (TTAAATTA), 54 to 61 (TTAAPTTA), and 62 to 69 (TTAASTTA). The interval 46–69 (TTAAATTATTAAPTTATTAASTTA) is 3 X 8 AA tandem repeat of T-T-A-A-[APS]-T-T-A. Ser-66 carries an O-linked (GalNAc...) serine glycan. Thr-67 and Thr-68 each carry an O-linked (GalNAc...) threonine glycan.

In terms of processing, O-glycosylated. As to expression, expressed in mammary, salivary glands and prostate. Also detected in lung. Mainly expressed in cancer cell lines of breast origin. Highly expressed in lymph node-positive compared with node-negative tumors. Detected in all lymph node containing metastatic cells.

It localises to the secreted. Its subcellular location is the membrane. Functionally, may play a role as marker for the diagnosis of metastatic breast cancer. The polypeptide is Mucin-like protein 1 (MUCL1) (Homo sapiens (Human)).